The following is a 270-amino-acid chain: Bis(5'-nucleosyl)-tetraphosphatase, symmetrical (270 aa).

It belongs to the Ap4A hydrolase family.

It carries out the reaction P(1),P(4)-bis(5'-adenosyl) tetraphosphate + H2O = 2 ADP + 2 H(+). Hydrolyzes diadenosine 5',5'''-P1,P4-tetraphosphate to yield ADP. In Actinobacillus pleuropneumoniae serotype 5b (strain L20), this protein is Bis(5'-nucleosyl)-tetraphosphatase, symmetrical.